A 394-amino-acid chain; its full sequence is Elongation factor Tu (394 aa).

Residues 10–204 (KPHINVGTIG…SLDKYIPIPV (195 aa)) form the tr-type G domain. Positions 19 to 26 (GHVDHGKT) are G1. 19 to 26 (GHVDHGKT) is a GTP binding site. Thr-26 contributes to the Mg(2+) binding site. Residues 60–64 (GITIN) are G2. The segment at 81–84 (DCPG) is G3. GTP is bound by residues 81–85 (DCPGH) and 136–139 (NKCD). Positions 136–139 (NKCD) are G4. The interval 174 to 176 (SAL) is G5.

The protein belongs to the TRAFAC class translation factor GTPase superfamily. Classic translation factor GTPase family. EF-Tu/EF-1A subfamily. As to quaternary structure, monomer.

Its subcellular location is the cytoplasm. The catalysed reaction is GTP + H2O = GDP + phosphate + H(+). Its function is as follows. GTP hydrolase that promotes the GTP-dependent binding of aminoacyl-tRNA to the A-site of ribosomes during protein biosynthesis. This Buchnera aphidicola subsp. Cinara cedri (strain Cc) protein is Elongation factor Tu.